A 310-amino-acid chain; its full sequence is D-alanine--D-alanine ligase (310 aa).

Residues 104–305 (KRLFHSEGLP…MPQLAERILQ (202 aa)) enclose the ATP-grasp domain. Position 135–190 (135–190 (LGDFHGAAFVKPLDSGSSVGISRAVGKDELIRGVAKALSVSHRCMVERAIEGRELT)) interacts with ATP. Residues aspartate 259, glutamate 272, and asparagine 274 each coordinate Mg(2+).

It belongs to the D-alanine--D-alanine ligase family. Mg(2+) is required as a cofactor. The cofactor is Mn(2+).

Its subcellular location is the cytoplasm. It carries out the reaction 2 D-alanine + ATP = D-alanyl-D-alanine + ADP + phosphate + H(+). It functions in the pathway cell wall biogenesis; peptidoglycan biosynthesis. Its function is as follows. Cell wall formation. This chain is D-alanine--D-alanine ligase, found in Magnetococcus marinus (strain ATCC BAA-1437 / JCM 17883 / MC-1).